A 206-amino-acid chain; its full sequence is Ras-related protein Ral-B (206 aa).

21–29 (GSGGVGKSA) contacts GTP. An Effector region motif is present at residues 43 to 51 (YEPTKADSY). GTP is bound by residues 68 to 72 (DTAGQ), 128 to 131 (NKSD), and 158 to 160 (SAK). Positions 180-189 (KMSENKDKNG) are enriched in basic and acidic residues. The tract at residues 180-206 (KMSENKDKNGKKSGKNKKSFKERCCLL) is disordered. Cys-203 is modified (cysteine methyl ester). Cys-203 is lipidated: S-geranylgeranyl cysteine. Residues 204–206 (CLL) constitute a propeptide, removed in mature form.

This sequence belongs to the small GTPase superfamily. Ras family. As to quaternary structure, interacts with EXOC2/Sec5 and EXOC8/Exo84. Interacts (via effector domain) with RALBP1. Prenylation is essential for membrane localization. In terms of processing, the farnesylated form confers resistance to the proapoptotic and anti-anchorage-dependent growth effects of some geranylgeranyltransferase I inhibitors.

The protein localises to the cell membrane. It localises to the midbody. It carries out the reaction GTP + H2O = GDP + phosphate + H(+). Its activity is regulated as follows. Alternates between an inactive form bound to GDP and an active form bound to GTP. Activated by a guanine nucleotide-exchange factor (GEF) and inactivated by a GTPase-activating protein (GAP). Multifunctional GTPase involved in a variety of cellular processes including gene expression, cell migration, cell proliferation, oncogenic transformation and membrane trafficking. Accomplishes its multiple functions by interacting with distinct downstream effectors. Acts as a GTP sensor for GTP-dependent exocytosis of dense core vesicles. Required both to stabilize the assembly of the exocyst complex and to localize functional exocyst complexes to the leading edge of migrating cells. Required for suppression of apoptosis. In late stages of cytokinesis, upon completion of the bridge formation between dividing cells, mediates exocyst recruitment to the midbody to drive abscission. Involved in ligand-dependent receptor mediated endocytosis of the EGF and insulin receptors. This Macaca fascicularis (Crab-eating macaque) protein is Ras-related protein Ral-B (RALB).